The primary structure comprises 248 residues: Tetraspanin-18 (248 aa).

Topologically, residues 1 to 13 (MEGDCLSCMKYLM) are cytoplasmic. Residues 14-34 (FVFNFFIFLGGACLLAIGIWV) form a helical membrane-spanning segment. Over 35–49 (MVDPTGFREIVAANP) the chain is Extracellular. A helical transmembrane segment spans residues 50-70 (LLLTGAYILLAMGGLLFLLGF). Residues 71–83 (LGCCGAVRENKCL) lie on the Cytoplasmic side of the membrane. The helical transmembrane segment at 84–104 (LLFFFLFILIIFLAELSAAIL) threads the bilayer. Residues 105–223 (AFIFRENLTR…TFETYVYLAG (119 aa)) are Extracellular-facing. 2 N-linked (GlcNAc...) asparagine glycosylation sites follow: N111 and N129. The helical transmembrane segment at 224-244 (ALAIGVLAIELFAMIFAMCLF) threads the bilayer. Residues 245 to 248 (RGIQ) are Cytoplasmic-facing.

Belongs to the tetraspanin (TM4SF) family. Interacts with ORAI1; this interaction regulates ORAI1 exit from the endoplasmic (ER), and/or Golgi, and trafficking to the cell surface. Highly expressed in primary endothelial cells. Expressed in the embryo heart. Weakly expressed the embryo skeletal muscle.

The protein resides in the membrane. Its function is as follows. Plays a role in the cell surface localization of ORAI1 and may participate in the regulation of Ca(2+) signaling and the VWF release in response to inflammatory stimuli. The polypeptide is Tetraspanin-18 (Homo sapiens (Human)).